Here is a 636-residue protein sequence, read N- to C-terminus: Probable potassium transport system protein Kup (636 aa).

The next 12 membrane-spanning stretches (helical) occupy residues 22–42 (LGLLVAAVGVVYGDIGTSPLY), 64–84 (ILSLILWSLLWVVSFKYVMFI), 115–135 (LMVICGLIGASLFYGDSMITP), 150–170 (FDGIDHWVVPISLVVLVALFL), 182–202 (LFGPIMVTWFVVLGALGVHGI), 220–240 (FFVVHPGMGVAILGAVVLALT), 261–281 (WFILVLPALVLNYFGQGALLL), 293–313 (LLAPSWALLPLVGLATMATVI), 351–371 (IYIGAVNWTLMVGVVLLVIGF), 383–403 (VAVTGTMLMTTILVSAVMLLL), 408–428 (PVLAVPLLMGFLFVDGLFFAA), and 433–453 (IVQGGAFPVLAGGVLFLLMST).

Belongs to the HAK/KUP transporter (TC 2.A.72) family.

Its subcellular location is the cell inner membrane. The catalysed reaction is K(+)(in) + H(+)(in) = K(+)(out) + H(+)(out). Its function is as follows. Transport of potassium into the cell. Likely operates as a K(+):H(+) symporter. In Pseudomonas putida (strain GB-1), this protein is Probable potassium transport system protein Kup.